The primary structure comprises 417 residues: Probable dihydrofolate synthetase (417 aa).

34 to 37 (GKGS) lines the ATP pocket. Positions 58, 123, and 151 each coordinate Mg(2+). Residues R274 and D289 each coordinate ATP.

It belongs to the folylpolyglutamate synthase family.

It carries out the reaction 7,8-dihydropteroate + L-glutamate + ATP = 7,8-dihydrofolate + ADP + phosphate + H(+). Its pathway is cofactor biosynthesis; tetrahydrofolylpolyglutamate biosynthesis. Functionally, glutamate-adding enzyme which catalyzes the binding of the first glutamyl side chain to dihydropteroate. Leads to the de nove synthesis of tetrahydrofolate. de novo. The polypeptide is Probable dihydrofolate synthetase (fol3) (Schizosaccharomyces pombe (strain 972 / ATCC 24843) (Fission yeast)).